The following is a 329-amino-acid chain: MAP kinase-activated protein kinase 2 (329 aa).

ATP is bound by residues 1-7 and Lys-22; that span reads LGINGKV. The 254-residue stretch at 1 to 254 folds into the Protein kinase domain; sequence LGINGKVLRI…ITEFMNHPWI (254 aa). 68–70 is a binding site for staurosporine; sequence ECL. Asp-115 acts as the Proton acceptor in catalysis. Position 151 is a phosphothreonine; by MAPK14 (Thr-151). Ser-201 carries the phosphoserine; by MAPK14 modification. Ser-257 is modified (phosphoserine; by autocatalysis). An autoinhibitory helix region spans residues 257-293; that stretch reads STKVPQTPLHTSRVLKEDKERWEDVKEEMTSALATMR. Thr-263 carries the phosphothreonine; by MAPK14 modification. Lys-282 is covalently cross-linked (Glycyl lysine isopeptide (Lys-Gly) (interchain with G-Cter in SUMO)). A Nuclear export signal (NES) motif is present at residues 285–294; it reads MTSALATMRV. A p38 MAPK-binding site region spans residues 295-319; it reads DYEQIKIKKIEDASNPLLLKRRKKA. 2 consecutive short sequence motifs (bipartite nuclear localization signal) follow at residues 300 to 303 and 314 to 318; these read KIKK and KRRKK.

Belongs to the protein kinase superfamily. CAMK Ser/Thr protein kinase family. As to quaternary structure, heterodimer with p38-alpha/MAPK14; this heterodimer forms a stable complex: molecules are positioned 'face to face' so that the ATP-binding sites of both kinases are at the heterodimer interface. Interacts with PHC2. Interacts with HSF1. In terms of processing, sumoylation inhibits the protein kinase activity. Phosphorylated and activated by MAP kinase p38-alpha/MAPK14 at Thr-151, Ser-201 and Thr-263.

It localises to the cytoplasm. Its subcellular location is the nucleus. The enzyme catalyses L-seryl-[protein] + ATP = O-phospho-L-seryl-[protein] + ADP + H(+). The catalysed reaction is L-threonyl-[protein] + ATP = O-phospho-L-threonyl-[protein] + ADP + H(+). Its activity is regulated as follows. Activated following phosphorylation by p38-alpha/MAPK14 following various stresses. Inhibited following sumoylation. Specifically inhibited by pyrrolopyridine inhibitors. Its function is as follows. Stress-activated serine/threonine-protein kinase involved in cytokine production, endocytosis, reorganization of the cytoskeleton, cell migration, cell cycle control, chromatin remodeling, DNA damage response and transcriptional regulation. Following stress, it is phosphorylated and activated by MAP kinase p38-alpha/MAPK14, leading to phosphorylation of substrates. Phosphorylates serine in the peptide sequence, Hyd-X-R-X(2)-S, where Hyd is a large hydrophobic residue. Phosphorylates ALOX5, CDC25B, CDC25C, CEP131, ELAVL1, HNRNPA0, HSP27/HSPB1, KRT18, KRT20, LIMK1, LSP1, PABPC1, PARN, PDE4A, RCSD1, RPS6KA3, TAB3 and TTP/ZFP36. Phosphorylates HSF1; leading to the interaction with HSP90 proteins and inhibiting HSF1 homotrimerization, DNA-binding and transactivation activities. Mediates phosphorylation of HSP27/HSPB1 in response to stress, leading to the dissociation of HSP27/HSPB1 from large small heat-shock protein (sHsps) oligomers and impairment of their chaperone activities and ability to protect against oxidative stress effectively. Involved in inflammatory response by regulating tumor necrosis factor (TNF) and IL6 production post-transcriptionally: acts by phosphorylating AU-rich elements (AREs)-binding proteins ELAVL1, HNRNPA0, PABPC1 and TTP/ZFP36, leading to regulation of the stability and translation of TNF and IL6 mRNAs. Phosphorylation of TTP/ZFP36, a major post-transcriptional regulator of TNF, promotes its binding to 14-3-3 proteins and reduces its ARE mRNA affinity, leading to inhibition of dependent degradation of ARE-containing transcripts. Phosphorylates CEP131 in response to cellular stress following ultraviolet irradiation which promotes binding of CEP131 to 14-3-3 proteins and inhibits formation of novel centriolar satellites. Also involved in late G2/M checkpoint following DNA damage through a process of post-transcriptional mRNA stabilization: following DNA damage, relocalizes from nucleus to cytoplasm and phosphorylates HNRNPA0 and PARN, leading to stabilization of GADD45A mRNA. Involved in toll-like receptor signaling pathway (TLR) in dendritic cells: required for acute TLR-induced macropinocytosis by phosphorylating and activating RPS6KA3. The polypeptide is MAP kinase-activated protein kinase 2 (MAPKAPK2) (Cricetulus longicaudatus (Long-tailed dwarf hamster)).